The chain runs to 373 residues: DNA replication and repair protein RecF (373 aa).

An ATP-binding site is contributed by 30–37 (GPNGQGKT).

This sequence belongs to the RecF family.

It is found in the cytoplasm. Functionally, the RecF protein is involved in DNA metabolism; it is required for DNA replication and normal SOS inducibility. RecF binds preferentially to single-stranded, linear DNA. It also seems to bind ATP. The chain is DNA replication and repair protein RecF from Streptomyces avermitilis (strain ATCC 31267 / DSM 46492 / JCM 5070 / NBRC 14893 / NCIMB 12804 / NRRL 8165 / MA-4680).